The primary structure comprises 785 residues: Uncoating factor OPG117 (785 aa).

Belongs to the orthopoxvirus OPG117 family. As to quaternary structure, homomultimer; hexamer. Interacts with OPG148.

The protein localises to the host cytoplasm. In terms of biological role, multifunctional protein required for genome uncoating and replication. Major viral uncoating protein that is required for the release of the viral genome from incoming viral cores containing the viral DNA genome. Possesses an ATPase activity that is required for hexamerization and uncoating. This Cynomys gunnisoni (Gunnison's prairie dog) protein is Uncoating factor OPG117 (OPG117).